A 368-amino-acid chain; its full sequence is DNA replication and repair protein RecF (368 aa).

30–37 is an ATP binding site; it reads GRNGSGKT.

The protein belongs to the RecF family.

The protein resides in the cytoplasm. In terms of biological role, the RecF protein is involved in DNA metabolism; it is required for DNA replication and normal SOS inducibility. RecF binds preferentially to single-stranded, linear DNA. It also seems to bind ATP. The polypeptide is DNA replication and repair protein RecF (Chlorobaculum parvum (strain DSM 263 / NCIMB 8327) (Chlorobium vibrioforme subsp. thiosulfatophilum)).